Reading from the N-terminus, the 311-residue chain is MALPILLDCDPGHDDAIAIVLALASPELDVKAITSSAGNQTPEKTLRNVLRMLTLLNRTDIPVAGGAVKPLMRDLIIADNVHGESGLDGPALPEPTFAPQNCTAVELMAKTLRESAEPVTIVSTGPQTNVALLLNSHPELHSKIARIVIMGGAMGIGNWTPAAEFNIYVDPEAAEIVFQSGIPVVMAGLDVTHKAQIHVEDTERFRAIGNPVSTIVAELLDFFLEYHKDEKWGFVGAPLHDPCTIAWLLKPELFTTVERWVGVETQGKYTQGMTVVDYYYLTGNKPNATVMVDVDRQGFVDLLAERLKFYA.

His240 is an active-site residue.

This sequence belongs to the IUNH family. RihA subfamily.

Functionally, hydrolyzes with equal efficiency cytidine or uridine to ribose and cytosine or uracil, respectively. The sequence is that of Pyrimidine-specific ribonucleoside hydrolase RihA from Escherichia fergusonii (strain ATCC 35469 / DSM 13698 / CCUG 18766 / IAM 14443 / JCM 21226 / LMG 7866 / NBRC 102419 / NCTC 12128 / CDC 0568-73).